The primary structure comprises 468 residues: Alpha-N-acetylgalactosaminidase (468 aa).

The segment at residues 1–30 (MENTRRNFLKKVTAAGIGAAGLAVTDQAMA) is a signal peptide (tat-type signal). NAD(+) is bound by residues 62 to 63 (SR), aspartate 84, 133 to 136 (WEWH), 154 to 155 (EV), and asparagine 183. Tyrosine 212 contacts substrate. 243 to 247 (AEAQW) is an NAD(+) binding site. Substrate contacts are provided by residues arginine 248, 260 to 263 (YPTH), and tyrosine 342. Tyrosine 260 is an NAD(+) binding site.

Belongs to the Gfo/Idh/MocA family. Glycosyl hydrolase 109 subfamily. NAD(+) serves as cofactor. In terms of processing, predicted to be exported by the Tat system. The position of the signal peptide cleavage has not been experimentally proven.

It catalyses the reaction Cleavage of non-reducing alpha-(1-&gt;3)-N-acetylgalactosamine residues from human blood group A and AB mucin glycoproteins, Forssman hapten and blood group A lacto series glycolipids.. Functionally, glycosidase that has specific alpha-N-acetylgalactosaminidase activity. This chain is Alpha-N-acetylgalactosaminidase (nagA), found in Tannerella forsythia (Bacteroides forsythus).